The chain runs to 456 residues: Adenylyltransferase and sulfurtransferase uba4 (456 aa).

ATP contacts are provided by residues G101, D122, 129 to 133 (SNLHR), K146, and 161 to 162 (DH). 2 residues coordinate Zn(2+): C210 and C213. C227 (glycyl thioester intermediate; for adenylyltransferase activity) is an active-site residue. Residues C300 and C303 each contribute to the Zn(2+) site. Residues 350-454 (KEKEHLLIDV…WKEQVDGSWP (105 aa)) enclose the Rhodanese domain. C409 serves as the catalytic Cysteine persulfide intermediate; for sulfurtransferase activity.

It in the N-terminal section; belongs to the HesA/MoeB/ThiF family. UBA4 subfamily. It depends on Zn(2+) as a cofactor.

The protein resides in the cytoplasm. Its subcellular location is the cytosol. The catalysed reaction is [molybdopterin-synthase sulfur-carrier protein]-C-terminal Gly-Gly + ATP + H(+) = [molybdopterin-synthase sulfur-carrier protein]-C-terminal Gly-Gly-AMP + diphosphate. It carries out the reaction [molybdopterin-synthase sulfur-carrier protein]-C-terminal Gly-Gly-AMP + S-sulfanyl-L-cysteinyl-[cysteine desulfurase] + AH2 = [molybdopterin-synthase sulfur-carrier protein]-C-terminal-Gly-aminoethanethioate + L-cysteinyl-[cysteine desulfurase] + A + AMP + 2 H(+). Its pathway is tRNA modification; 5-methoxycarbonylmethyl-2-thiouridine-tRNA biosynthesis. In terms of biological role, plays a central role in 2-thiolation of mcm(5)S(2)U at tRNA wobble positions of cytosolic tRNA(Lys), tRNA(Glu) and tRNA(Gln). Also essential during biosynthesis of the molybdenum cofactor. Acts by mediating the C-terminal thiocarboxylation of sulfur carriers urm1 and mocs2a. Its N-terminus first activates urm1 and mocs2a as acyl-adenylates (-COAMP), then the persulfide sulfur on the catalytic cysteine is transferred to urm1 and mocs2a to form thiocarboxylation (-COSH) of their C-terminus. The reaction probably involves hydrogen sulfide that is generated from the persulfide intermediate and that acts as a nucleophile towards urm1 and mocs2a. Subsequently, a transient disulfide bond is formed. Does not use thiosulfate as sulfur donor; nfs1 probably acting as a sulfur donor for thiocarboxylation reactions. This Sclerotinia sclerotiorum (strain ATCC 18683 / 1980 / Ss-1) (White mold) protein is Adenylyltransferase and sulfurtransferase uba4.